Here is a 108-residue protein sequence, read N- to C-terminus: ATP synthase subunit H, mitochondrial (108 aa).

A mitochondrion-targeting transit peptide spans 1-19 (MFTLRAASRRAFSTSIARR). 2 disordered regions span residues 40 to 60 (AKDA…KPPV) and 75 to 108 (APVD…GVAV). The segment covering 47 to 60 (VKPWSAPSAPKPPV) has biased composition (low complexity). The span at 81 to 92 (GQTNSKSASPQA) shows a compositional bias: polar residues. Positions 93–108 (NDEDWLAFEEEEGVAV) are enriched in acidic residues.

In terms of assembly, F-type ATP synthases have 2 components, the catalytic core F(1) and the membrane-embedded component F(0), linked together by a central stalk and a peripheral stalk. The central stalk, also called rotor shaft, is often seen as part of F(1). The peripheral stalk is seen as part of F(0). F(0) contains the membrane channel next to the rotor. F-type ATP synthases form dimers but each monomer functions independently in ATP generation. The dimer consists of 17 different polypeptides: ATP1 (subunit alpha, 3 molecules per monomer, part of F(1)), ATP2 (subunit beta, 3 copies per monomer, part of F(1)), ATP3 (subunit gamma, part of the central stalk), ATP4 (subunit b, part of the peripheral stalk), ATP5/OSCP (subunit 5/OSCP, part of the peripheral stalk), ATP6 (subunit a, part of the peripheral stalk), ATP7 (subunit d, part of the peripheral stalk), ATP8 (subunit 8, part of the peripheral stalk), OLI1 (subunit c, part of the rotor, 10 molecules per monomer), ATP14 (subunit H, part of the peripheral stalk), ATP15 (subunit epsilon, part of the central stalk), ATP16 (subunit delta, part of the central stalk), ATP17 (subunit f, part of the peripheral stalk), ATP18 (subunit i/j, part of the peripheral stalk), ATP19 (subunit k, dimer-specific, at interface between monomers), ATP20 (subunit g, at interface between monomers), TIM11 (subunit e, at interface between monomers).

It is found in the mitochondrion inner membrane. Functionally, mitochondrial membrane ATP synthase (F(1)F(0) ATP synthase or Complex V) produces ATP from ADP in the presence of a proton gradient across the membrane which is generated by electron transport complexes of the respiratory chain. F-type ATP synthases consist of two structural domains, F(1) - containing the extramembraneous catalytic core, and F(0) - containing the membrane proton channel, linked together by a central stalk and a peripheral stalk. During catalysis, ATP synthesis in the catalytic domain of F(1) is coupled via a rotary mechanism of the central stalk subunits to proton translocation. Part of the peripheral stalk. The protein is ATP synthase subunit H, mitochondrial of Yarrowia lipolytica (strain CLIB 122 / E 150) (Yeast).